Here is a 1765-residue protein sequence, read N- to C-terminus: RANBP2-like and GRIP domain-containing protein 5/6 (1765 aa).

Threonine 19 carries the post-translational modification Phosphothreonine. Serine 21 bears the Phosphoserine mark. 3 TPR repeats span residues 26–59 (SMKG…QERD), 60–93 (PKAH…NPTQ), and 648–681 (EDAH…VSYW). Disordered stretches follow at residues 760-804 (GPLY…PRWT) and 924-945 (FGIS…NDTG). A compositionally biased stretch (low complexity) spans 778 to 797 (STPSPTKYSLSPSKSYKYSP). Positions 931 to 941 (NQEKKREKPLE) are enriched in basic and acidic residues. One can recognise a RanBD1 1 domain in the interval 1036-1172 (HFEPVVQMPE…FEECQRLLLD (137 aa)). 2 disordered regions span residues 1214-1247 (KVTE…PTLE) and 1306-1330 (AKLN…EERD). A compositionally biased stretch (polar residues) spans 1235–1244 (IKPNAENTGP). The span at 1317–1329 (TDEESVVTQEEER) shows a compositional bias: acidic residues. The RanBD1 2 domain maps to 1333–1469 (YFEPVVPLPD…FDEAKTAQEK (137 aa)). Polar residues predominate over residues 1580–1593 (NNSETSSVAQSGSE). The segment at 1580–1621 (NNSETSSVAQSGSESKVEPKKCELSKNSDIEQSSDSKVKNLS) is disordered. Over residues 1594 to 1617 (SKVEPKKCELSKNSDIEQSSDSKV) the composition is skewed to basic and acidic residues. Residues 1702–1752 (REKSAANLEYLKNVLLQFIFLKPGSERERLLPVINTMLQLSPEEKGKLAAV) form the GRIP domain.

Expressed in testis.

The protein resides in the cytoplasm. This is RANBP2-like and GRIP domain-containing protein 5/6 (RGPD5) from Homo sapiens (Human).